Consider the following 219-residue polypeptide: GTP cyclohydrolase-2 (219 aa).

51 to 55 (RIHSE) contacts GTP. Positions 56, 67, and 69 each coordinate Zn(2+). GTP-binding positions include Gln-72, 94–96 (EGR), and Thr-116. Asp-128 functions as the Proton acceptor in the catalytic mechanism. The Nucleophile role is filled by Arg-130. GTP is bound by residues Thr-151 and Lys-156.

The protein belongs to the GTP cyclohydrolase II family. Zn(2+) serves as cofactor.

The enzyme catalyses GTP + 4 H2O = 2,5-diamino-6-hydroxy-4-(5-phosphoribosylamino)-pyrimidine + formate + 2 phosphate + 3 H(+). Its pathway is cofactor biosynthesis; riboflavin biosynthesis; 5-amino-6-(D-ribitylamino)uracil from GTP: step 1/4. In terms of biological role, catalyzes the conversion of GTP to 2,5-diamino-6-ribosylamino-4(3H)-pyrimidinone 5'-phosphate (DARP), formate and pyrophosphate. This is GTP cyclohydrolase-2 from Pasteurella multocida (strain Pm70).